A 316-amino-acid polypeptide reads, in one-letter code: MLTFQQMILTLQAYWDRQGCALLQPIDLEVGAGTSHVHTFLRAIGPEPWRAAYVQPSRRPKDGRYGENPNRLQHYYQYQVVLKPAPENILVLYLGSLEALGLDLKQNDIRFVEDDWENPTLGAWGLGWEVWLNGMEVTQFTYFQQVGGIDCKPITGEITYGIERLAMYLQKVENVYDLVWTEWVENGETRRLTYGDVYHQNEVEQSTYNFEHSNTEILFRHFAEHEGEAKRLMGNGDGADAAAETGTRLALPAYEQVLKAAHTFNLLDARGAISVTERAAYIGRIRNLSRQVAQAYYDSREALGFPMCGQRDGARA.

Belongs to the class-II aminoacyl-tRNA synthetase family. As to quaternary structure, tetramer of two alpha and two beta subunits.

The protein resides in the cytoplasm. It carries out the reaction tRNA(Gly) + glycine + ATP = glycyl-tRNA(Gly) + AMP + diphosphate. The chain is Glycine--tRNA ligase alpha subunit from Cupriavidus taiwanensis (strain DSM 17343 / BCRC 17206 / CCUG 44338 / CIP 107171 / LMG 19424 / R1) (Ralstonia taiwanensis (strain LMG 19424)).